The primary structure comprises 249 residues: Triosephosphate isomerase (249 aa).

Substrate-binding residues include Asn12 and Lys14. Lys14 is modified (N6-acetyllysine). A Deamidated asparagine modification is found at Asn16. At Tyr68 the chain carries 3'-nitrotyrosine. Asn72 is modified (deamidated asparagine). Ser80 carries the post-translational modification Phosphoserine. The Electrophile role is filled by His96. Ser106 carries the post-translational modification Phosphoserine. Residue Lys142 forms a Glycyl lysine isopeptide (Lys-Gly) (interchain with G-Cter in SUMO1) linkage. Lys149 bears the N6-succinyllysine mark. N6-acetyllysine; alternate is present on Lys156. Lys156 is modified (N6-succinyllysine; alternate). The residue at position 159 (Ser159) is a Phosphoserine. The Proton acceptor role is filled by Glu166. Thr173 is modified (phosphothreonine). Lys194 is subject to N6-acetyllysine; alternate. Lys194 carries the post-translational modification N6-succinyllysine; alternate. N6-methyllysine; alternate is present on Lys194. Ser198 is modified (phosphoserine). Residue Tyr209 is modified to 3'-nitrotyrosine. Ser212 is subject to Phosphoserine. Thr214 carries the phosphothreonine modification. Ser223 is modified (phosphoserine). An N6-acetyllysine modification is found at Lys238.

This sequence belongs to the triosephosphate isomerase family. In terms of assembly, homodimer. Post-translationally, asn-16 and Asn-72 undergo deamidation which gives rise to four extra negative charges. These are expected to decrease subunit-subunit interactions and so expose the hydrophobic interface to the aqueous environment.

The protein resides in the cytoplasm. The enzyme catalyses D-glyceraldehyde 3-phosphate = dihydroxyacetone phosphate. The catalysed reaction is dihydroxyacetone phosphate = methylglyoxal + phosphate. It participates in carbohydrate degradation; glycolysis; D-glyceraldehyde 3-phosphate from glycerone phosphate: step 1/1. It functions in the pathway carbohydrate biosynthesis; gluconeogenesis. Its function is as follows. Triosephosphate isomerase is an extremely efficient metabolic enzyme that catalyzes the interconversion between dihydroxyacetone phosphate (DHAP) and D-glyceraldehyde-3-phosphate (G3P) in glycolysis and gluconeogenesis. In terms of biological role, it is also responsible for the non-negligible production of methylglyoxal a reactive cytotoxic side-product that modifies and can alter proteins, DNA and lipids. This is Triosephosphate isomerase (TPI1) from Oryctolagus cuniculus (Rabbit).